Reading from the N-terminus, the 507-residue chain is ATP synthase subunit alpha, plastid (507 aa).

An ATP-binding site is contributed by 170–177; sequence GDRQTGKT.

The protein belongs to the ATPase alpha/beta chains family. In terms of assembly, F-type ATPases have 2 components, CF(1) - the catalytic core - and CF(0) - the membrane proton channel. CF(1) has five subunits: alpha(3), beta(3), gamma(1), delta(1), epsilon(1). CF(0) has four main subunits: a, b, b' and c.

The protein localises to the plastid membrane. The enzyme catalyses ATP + H2O + 4 H(+)(in) = ADP + phosphate + 5 H(+)(out). Produces ATP from ADP in the presence of a proton gradient across the membrane. The alpha chain is a regulatory subunit. The chain is ATP synthase subunit alpha, plastid from Cuscuta gronovii (Common dodder).